A 392-amino-acid chain; its full sequence is MNMRLGMPEAPAPGLAPRRITRQLMVGNVGVGSDHQISVQSMCITKTHDVNATLQQIAELTTAGCDIVRVACPRQEDADALAEIARHSKIPVIVDIHFQPKYIFAAIDAGCAAVRVNPGNIKEFDGRVGEVAKAAAAAGIPIRIGVNAGSLDKRFMDKYGKATSEALVESALWEASLFEEHGFGNIKISVKHHDPVVMVAAYEQLAAQCDYPLHLGVTEAGPVFQGTVKSAVAFGALLSKGIGDTIRVSLSAPPVEEIKVGNQILESLNLRPRSHEIVSCPSCGRAQVDVYKLANEVSAGLDGLEVPLRIAVMGCVVNGPGEARDADLGVASGNGKGQIFVKGEVIKTVPEAQIVETLIEEAMRLVSEMGTEKGSDHCSETTRSGSPVVTVN.

4 residues coordinate [4Fe-4S] cluster: Cys-280, Cys-283, Cys-315, and Glu-322. The segment covering 371–380 has biased composition (basic and acidic residues); sequence TEKGSDHCSE. The disordered stretch occupies residues 371 to 392; sequence TEKGSDHCSETTRSGSPVVTVN. Positions 381 to 392 are enriched in polar residues; it reads TTRSGSPVVTVN.

The protein belongs to the IspG family. Requires [4Fe-4S] cluster as cofactor.

The catalysed reaction is (2E)-4-hydroxy-3-methylbut-2-enyl diphosphate + oxidized [flavodoxin] + H2O + 2 H(+) = 2-C-methyl-D-erythritol 2,4-cyclic diphosphate + reduced [flavodoxin]. It functions in the pathway isoprenoid biosynthesis; isopentenyl diphosphate biosynthesis via DXP pathway; isopentenyl diphosphate from 1-deoxy-D-xylulose 5-phosphate: step 5/6. Its function is as follows. Converts 2C-methyl-D-erythritol 2,4-cyclodiphosphate (ME-2,4cPP) into 1-hydroxy-2-methyl-2-(E)-butenyl 4-diphosphate. The chain is 4-hydroxy-3-methylbut-2-en-1-yl diphosphate synthase (flavodoxin) from Mycobacterium leprae (strain Br4923).